The primary structure comprises 583 residues: Aspartate--tRNA ligase (583 aa).

Glutamate 169 is a binding site for L-aspartate. Residues glutamine 193–lysine 196 form an aspartate region. Residue arginine 215 coordinates L-aspartate. Residues arginine 215–glutamate 217 and glutamine 224 each bind ATP. An L-aspartate-binding site is contributed by histidine 443. Glutamate 477 lines the ATP pocket. Arginine 484 is an L-aspartate binding site. Glycine 529–arginine 532 serves as a coordination point for ATP.

Belongs to the class-II aminoacyl-tRNA synthetase family. Type 1 subfamily. In terms of assembly, homodimer.

The protein localises to the cytoplasm. The enzyme catalyses tRNA(Asp) + L-aspartate + ATP = L-aspartyl-tRNA(Asp) + AMP + diphosphate. Functionally, catalyzes the attachment of L-aspartate to tRNA(Asp) in a two-step reaction: L-aspartate is first activated by ATP to form Asp-AMP and then transferred to the acceptor end of tRNA(Asp). This is Aspartate--tRNA ligase from Stenotrophomonas maltophilia (strain R551-3).